Consider the following 252-residue polypeptide: Hydroxyacylglutathione hydrolase (252 aa).

Positions 52, 54, 56, 57, 107, 128, and 166 each coordinate Zn(2+).

The protein belongs to the metallo-beta-lactamase superfamily. Glyoxalase II family. Monomer. Requires Zn(2+) as cofactor.

It carries out the reaction an S-(2-hydroxyacyl)glutathione + H2O = a 2-hydroxy carboxylate + glutathione + H(+). Its pathway is secondary metabolite metabolism; methylglyoxal degradation; (R)-lactate from methylglyoxal: step 2/2. In terms of biological role, thiolesterase that catalyzes the hydrolysis of S-D-lactoyl-glutathione to form glutathione and D-lactic acid. This Neisseria meningitidis serogroup C (strain 053442) protein is Hydroxyacylglutathione hydrolase.